Here is a 496-residue protein sequence, read N- to C-terminus: Aspartyl/glutamyl-tRNA(Asn/Gln) amidotransferase subunit B (496 aa).

The protein belongs to the GatB/GatE family. GatB subfamily. As to quaternary structure, heterotrimer of A, B and C subunits.

It catalyses the reaction L-glutamyl-tRNA(Gln) + L-glutamine + ATP + H2O = L-glutaminyl-tRNA(Gln) + L-glutamate + ADP + phosphate + H(+). The enzyme catalyses L-aspartyl-tRNA(Asn) + L-glutamine + ATP + H2O = L-asparaginyl-tRNA(Asn) + L-glutamate + ADP + phosphate + 2 H(+). Its function is as follows. Allows the formation of correctly charged Asn-tRNA(Asn) or Gln-tRNA(Gln) through the transamidation of misacylated Asp-tRNA(Asn) or Glu-tRNA(Gln) in organisms which lack either or both of asparaginyl-tRNA or glutaminyl-tRNA synthetases. The reaction takes place in the presence of glutamine and ATP through an activated phospho-Asp-tRNA(Asn) or phospho-Glu-tRNA(Gln). The protein is Aspartyl/glutamyl-tRNA(Asn/Gln) amidotransferase subunit B of Nitrosospira multiformis (strain ATCC 25196 / NCIMB 11849 / C 71).